A 196-amino-acid polypeptide reads, in one-letter code: Chromophore lyase CpcT/CpeT (196 aa).

The protein belongs to the CpcT/CpeT biliprotein lyase family.

Its function is as follows. Covalently attaches a chromophore to Cys residue(s) of phycobiliproteins. The polypeptide is Chromophore lyase CpcT/CpeT (Synechocystis sp. (strain ATCC 27184 / PCC 6803 / Kazusa)).